We begin with the raw amino-acid sequence, 780 residues long: Phosphoenolpyruvate synthase (780 aa).

Histidine 409 (tele-phosphohistidine intermediate) is an active-site residue. Substrate is bound by residues arginine 499, arginine 566, glutamate 668, glycine 689, serine 690, asparagine 691, and aspartate 692. Residue glutamate 668 participates in Mg(2+) binding. Position 692 (aspartate 692) interacts with Mg(2+).

This sequence belongs to the PEP-utilizing enzyme family. Mg(2+) serves as cofactor.

The catalysed reaction is pyruvate + ATP + H2O = phosphoenolpyruvate + AMP + phosphate + 2 H(+). It functions in the pathway carbohydrate biosynthesis; gluconeogenesis. Functionally, catalyzes the phosphorylation of pyruvate to phosphoenolpyruvate. The sequence is that of Phosphoenolpyruvate synthase (ppsA) from Deinococcus radiodurans (strain ATCC 13939 / DSM 20539 / JCM 16871 / CCUG 27074 / LMG 4051 / NBRC 15346 / NCIMB 9279 / VKM B-1422 / R1).